A 946-amino-acid polypeptide reads, in one-letter code: Protocadherin alpha-10 (946 aa).

Positions 1-30 (MSCVAMKYCHESWCLLLSLLLFAIWEPGSG) are cleaved as a signal peptide. 6 consecutive Cadherin domains span residues 31–134 (QLRY…PPVF), 135–243 (PTTE…APAF), 244–351 (DRAI…APKI), 352–456 (IVTS…APAF), 457–566 (AQSE…APTL), and 582–679 (VPRS…APKA). Over 31 to 697 (QLRYSVPEEA…ASESSVVDVN (667 aa)) the chain is Extracellular. Asparagine 258 carries N-linked (GlcNAc...) asparagine glycosylation. N-linked (GlcNAc...) asparagine glycosylation occurs at asparagine 549. The helical transmembrane segment at 698–718 (VYLIIAICAVSSLLVLTLVLY) threads the bilayer. At 719-946 (TALRCSALPT…GNSTTDNSDQ (228 aa)) the chain is on the cytoplasmic side. PXXP repeat units lie at residues 734 to 737 (PGKP), 774 to 777 (PSVP), 795 to 798 (PRQP), 828 to 831 (PGGP), 869 to 872 (PGNP), and 887 to 890 (PGSP). A 6 X 4 AA repeats of P-X-X-P region spans residues 734-890 (PGKPMLVCSS…PDKFIIPGSP (157 aa)). Disordered regions lie at residues 826 to 852 (AGPG…EVSP) and 865 to 946 (FKYG…NSDQ). The segment covering 905 to 919 (DKSDFITFGKKEETK) has biased composition (basic and acidic residues).

It is found in the cell membrane. Its function is as follows. Potential calcium-dependent cell-adhesion protein. May be involved in the establishment and maintenance of specific neuronal connections in the brain. This is Protocadherin alpha-10 from Mus musculus (Mouse).